A 240-amino-acid polypeptide reads, in one-letter code: Methylthioribulose-1-phosphate dehydratase (240 aa).

Residue Cys-103 coordinates substrate. 2 residues coordinate Zn(2+): His-121 and His-123. Glu-144 (proton donor/acceptor) is an active-site residue. His-200 provides a ligand contact to Zn(2+).

It belongs to the aldolase class II family. MtnB subfamily. Zn(2+) serves as cofactor.

It is found in the cytoplasm. It catalyses the reaction 5-(methylsulfanyl)-D-ribulose 1-phosphate = 5-methylsulfanyl-2,3-dioxopentyl phosphate + H2O. It participates in amino-acid biosynthesis; L-methionine biosynthesis via salvage pathway; L-methionine from S-methyl-5-thio-alpha-D-ribose 1-phosphate: step 2/6. Its function is as follows. Catalyzes the dehydration of methylthioribulose-1-phosphate (MTRu-1-P) into 2,3-diketo-5-methylthiopentyl-1-phosphate (DK-MTP-1-P). In Komagataella phaffii (strain GS115 / ATCC 20864) (Yeast), this protein is Methylthioribulose-1-phosphate dehydratase.